Here is a 632-residue protein sequence, read N- to C-terminus: MPTTFHEIPRKRPTTPLLDRANTPDGLRRLGEAELETLADELRLELLYTVGQTGGHFGAGLGVIELTIALHYVFDTPDDRLVWDVGHQAYPHKILTGRRERMETLRQKDGIAAFPRRSESEYDTFGVGHSSTSISAALGMAIAARLQNSDRKAIAVIGDGALTAGMAFEALNHAPEVDANMLVILNDNDMSISRNVGGLSNYLAKILSSRTYASMREGSKKVLSRLPGAWEIARRTEEYAKGMLVPGTLFEELGWNYIGPIDGHDLPTLIATLRNMRDLKGPQFLHIVTKKGKGFAPAEVDPIGYHAITKLEPLDAPAAAPKKAGGPKYSGVFGEWLCDMAAADPRLVGITPAMKEGSDLVAFSERFPLRYFDVAIAEQHAVTLAAGMACEGAKPVVAIYSTFLQRGYDQLVHDVAVQNLDVLFAIDRAGLVGEDGPTHAGSFDLSFLRCIPGMVIMTPSDENELRKMLTTGHLYNGPAAVRYPRGTGPNATIEKDLEPIEIGKGVVRRQGSKVALLVFGVQMAEALKVAETLDATVVDMRFVKPMDEALVREIANSHDLLVTIEENAIMGGAGGAVSEFLARENILKSVLHLGLPDVYVEHAKPAQMLAECGLDEVGIEAAVRERLELLNR.

Positions 1–25 (MPTTFHEIPRKRPTTPLLDRANTPD) are disordered. Thiamine diphosphate is bound by residues histidine 87 and 128 to 130 (GHS). Residue aspartate 159 coordinates Mg(2+). Thiamine diphosphate-binding positions include 160–161 (GA), asparagine 188, phenylalanine 295, and glutamate 378. Position 188 (asparagine 188) interacts with Mg(2+).

Belongs to the transketolase family. DXPS subfamily. As to quaternary structure, homodimer. The cofactor is Mg(2+). Thiamine diphosphate serves as cofactor.

The catalysed reaction is D-glyceraldehyde 3-phosphate + pyruvate + H(+) = 1-deoxy-D-xylulose 5-phosphate + CO2. It participates in metabolic intermediate biosynthesis; 1-deoxy-D-xylulose 5-phosphate biosynthesis; 1-deoxy-D-xylulose 5-phosphate from D-glyceraldehyde 3-phosphate and pyruvate: step 1/1. Functionally, catalyzes the acyloin condensation reaction between C atoms 2 and 3 of pyruvate and glyceraldehyde 3-phosphate to yield 1-deoxy-D-xylulose-5-phosphate (DXP). In Pseudomonas fluorescens (strain Pf0-1), this protein is 1-deoxy-D-xylulose-5-phosphate synthase.